The sequence spans 103 residues: MIPVKEHAHTLCFPLLVAPRSSKNMVVGAHDNALKIKITAPPVDGRANEMCVAFLSRLLGIPKTSITIAAGAASKRKEVCLALSPNAAGKQEAARIKALLAGY.

It belongs to the UPF0235 family.

In Desulfosudis oleivorans (strain DSM 6200 / JCM 39069 / Hxd3) (Desulfococcus oleovorans), this protein is UPF0235 protein Dole_0289.